The primary structure comprises 255 residues: tRNA (guanine-N(1)-)-methyltransferase (255 aa).

S-adenosyl-L-methionine is bound by residues Gly-113 and 133 to 138 (IGDYVL).

This sequence belongs to the RNA methyltransferase TrmD family. Homodimer.

The protein localises to the cytoplasm. It catalyses the reaction guanosine(37) in tRNA + S-adenosyl-L-methionine = N(1)-methylguanosine(37) in tRNA + S-adenosyl-L-homocysteine + H(+). Functionally, specifically methylates guanosine-37 in various tRNAs. This is tRNA (guanine-N(1)-)-methyltransferase from Klebsiella pneumoniae (strain 342).